We begin with the raw amino-acid sequence, 119 residues long: Ergochrome gene cluster protein CPUR_05426 (119 aa).

It participates in pigment biosynthesis. Part of the ergochrome gene cluster responsible for the typical purple-black color of the ergot sclerotia. The ergochrome gene cluster produces several ergot pigments including the yellow ergochrome secalonic acid and its derivatives, as well as the red anthraquinones endocrocin and clavorubin. The pathway begins with the synthesis of atrochrysone thioester by the polyketide synthase (PKS) CPUR_05437. The atrochrysone carboxyl ACP thioesterase CPUR_05436 then breaks the thioester bond and releases the atrochrysone carboxylic acid from CPUR_05437. The atrochrysone carboxylic acid is then converted to atrochrysone which is further transformed into emodin anthrone. The next step is performed by the anthrone oxygenase CPUR_05434 that catalyzes the oxidation of emodinanthrone to emodin. Emodin is further modified to yield monodictyphenone via several steps involving CPUR_05427, CPUR_05428, CPUR_05429 and CPUR_05430. The short chain dehydrogenase/reductase CPUR_05418 then catalyzes the C-5 ketoreduction to give the xanthone skeleton of the monomeric units. Ergochromes formation requires further dimerization steps of different xanthone units, probably catalyzed by the cytochrome P450 monooxygenase CPUR_05419. CPUR_05425, CPUR_05426 and CPUR_05431 are unique to Claviceps, thus it is likely that they are involved in further modification of xanthone units or in their dimerization. The yellow ergochromes and the red anthraquinone pigments endocrocin and clavorubin are products from the same PKS derived precursors and the latter are likely shunt products in the pathway of xanthone biosynthesis. It is proposed that atrochrysone carboxylic acid released from the PKS CPUR_05437 can also be converted to endocrocin anthrone which is further oxidized into endocrocin by CPUR_05435. Endocrocin could be then modified to clavorubin, possibly by CPUR_05423 and CPUR_05431. Clavorubin is the principal anthraquinone metabolite produced by the cluster with a much higher yield compared to endocrocin. This Claviceps purpurea (strain 20.1) (Ergot fungus) protein is Ergochrome gene cluster protein CPUR_05426.